Consider the following 442-residue polypeptide: Terpene cyclase aneC (442 aa).

Mg(2+)-binding residues include aspartate 196, asparagine 327, serine 331, and glutamate 335. Positions 419 and 420 each coordinate (2E,6E)-farnesyl diphosphate.

It belongs to the terpene synthase family. As to quaternary structure, homodimer. It depends on Mg(2+) as a cofactor.

It catalyses the reaction (2E,6E)-farnesyl diphosphate = dauca-4,7-diene + diphosphate. The protein operates within secondary metabolite biosynthesis. Terpene cyclase; part of the gene cluster that mediates the biosynthesis of aculenes, a unique type of norsesquiterpenes that contain a nordaucane skeleton linked to an L-proline moiety and are of mixed biosynthetic origin. The pathway begins with the synthesis of dauca-4,7-diene by the terpene cyclase aneC using farnesyl pyrophosphate (FPP) as substrate. The cytochrome P450 monooxygenase aneF then performs the initial oxidation at C-12 of dauca-4,7-diene to yield asperaculane D. Asperaculane D is substrate of the cytochrome P450 monooxygenase aneD for C-10 hydroxylation to yield asperaculane E. The cytochrome P450 monooxygenase aneG then converts asperaculane E into aculene D via C-2 oxidation. The monomodular nonribosomal peptide synthtase aneB adenylates L-proline and the thiohydrolase aneE transfers this activated L-proline derivative to aculenes D and C to produce respectively aculenes B and A. The dioxygenase aneA converts aculene D into aculene C, and aculene B into aculene A by introducing the 5,6-alkene moiety. Asperculanes A, B, C and F, as well as 14-prolyl asperculane C, might be shunt products of the pathway. The polypeptide is Terpene cyclase aneC (Aspergillus aculeatus (strain ATCC 16872 / CBS 172.66 / WB 5094)).